A 371-amino-acid chain; its full sequence is 2-aminoethylphosphonate--pyruvate transaminase (371 aa).

Residue Lys195 is modified to N6-(pyridoxal phosphate)lysine.

The protein belongs to the class-V pyridoxal-phosphate-dependent aminotransferase family. PhnW subfamily. In terms of assembly, homotetramer; however this is for an enzyme with a molecular weight of 16500, which is in disagreement with the weight of this protein. Pyridoxal 5'-phosphate is required as a cofactor.

The catalysed reaction is (2-aminoethyl)phosphonate + pyruvate = phosphonoacetaldehyde + L-alanine. Inhibited by phosphonic acids and very slightly inhibited by aminophosphonic acids. In terms of biological role, involved in phosphonate degradation. This Pseudomonas aeruginosa (strain ATCC 15692 / DSM 22644 / CIP 104116 / JCM 14847 / LMG 12228 / 1C / PRS 101 / PAO1) protein is 2-aminoethylphosphonate--pyruvate transaminase (phnW).